Here is a 261-residue protein sequence, read N- to C-terminus: uncharacterized protein (261 aa).

The first 22 residues, 1-22 (MGYSKRFALYISVMILIFAIAG), serve as a signal peptide directing secretion. Cys23 is lipidated: N-palmitoyl cysteine. Cys23 carries the S-diacylglycerol cysteine lipid modification.

It belongs to the staphylococcal tandem lipoprotein family.

It localises to the cell membrane. This is an uncharacterized protein from Staphylococcus aureus (strain N315).